We begin with the raw amino-acid sequence, 149 residues long: Nucleoside diphosphate kinase (149 aa).

Residues Lys-9, Phe-57, Arg-85, Thr-91, Arg-102, and Asn-112 each contribute to the ATP site. Catalysis depends on His-115, which acts as the Pros-phosphohistidine intermediate.

It belongs to the NDK family. Homotetramer. Mg(2+) is required as a cofactor.

It is found in the cytoplasm. The catalysed reaction is a 2'-deoxyribonucleoside 5'-diphosphate + ATP = a 2'-deoxyribonucleoside 5'-triphosphate + ADP. It carries out the reaction a ribonucleoside 5'-diphosphate + ATP = a ribonucleoside 5'-triphosphate + ADP. Functionally, major role in the synthesis of nucleoside triphosphates other than ATP. The ATP gamma phosphate is transferred to the NDP beta phosphate via a ping-pong mechanism, using a phosphorylated active-site intermediate. This is Nucleoside diphosphate kinase from Staphylococcus saprophyticus subsp. saprophyticus (strain ATCC 15305 / DSM 20229 / NCIMB 8711 / NCTC 7292 / S-41).